Here is a 444-residue protein sequence, read N- to C-terminus: Tol-Pal system protein TolB (444 aa).

Residues 1-18 form the signal peptide; sequence MKNIIYCILLLFSFNSYA.

The protein belongs to the TolB family. In terms of assembly, the Tol-Pal system is composed of five core proteins: the inner membrane proteins TolA, TolQ and TolR, the periplasmic protein TolB and the outer membrane protein Pal. They form a network linking the inner and outer membranes and the peptidoglycan layer.

The protein localises to the periplasm. Part of the Tol-Pal system, which plays a role in outer membrane invagination during cell division and is important for maintaining outer membrane integrity. This is Tol-Pal system protein TolB from Rickettsia bellii (strain OSU 85-389).